The sequence spans 284 residues: Sulfotransferase 4A1 (284 aa).

A phosphothreonine mark is found at threonine 8, threonine 11, and threonine 205.

This sequence belongs to the sulfotransferase 1 family. Expressed in brain, cerebellum and hypothalamus. Not detected in pancreas, liver, lung, intestine, kidney, uterus, adrenal gland, thymus, spleen, epididymis, testicle, and heart.

It localises to the cytoplasm. Functionally, atypical sulfotransferase family member with very low affinity for 3'-phospho-5'-adenylyl sulfate (PAPS) and very low catalytic activity towards L-triiodothyronine, thyroxine, estrone, p-nitrophenol, 2-naphthylamine, and 2-beta-naphthol. May have a role in the metabolism of drugs and neurotransmitters in the CNS. This Mus musculus (Mouse) protein is Sulfotransferase 4A1 (Sult4a1).